The following is a 95-amino-acid chain: Co-chaperonin GroES (95 aa).

The protein belongs to the GroES chaperonin family. Heptamer of 7 subunits arranged in a ring. Interacts with the chaperonin GroEL.

It is found in the cytoplasm. Its function is as follows. Together with the chaperonin GroEL, plays an essential role in assisting protein folding. The GroEL-GroES system forms a nano-cage that allows encapsulation of the non-native substrate proteins and provides a physical environment optimized to promote and accelerate protein folding. GroES binds to the apical surface of the GroEL ring, thereby capping the opening of the GroEL channel. This Beijerinckia indica subsp. indica (strain ATCC 9039 / DSM 1715 / NCIMB 8712) protein is Co-chaperonin GroES.